The primary structure comprises 429 residues: MKLQKPKGTQDILPAESAKWQYVEGFAREIFKRYNYAEVRTPIFEHYEVISRSVGDTTDIVTKEMYDFYDKGDRHITLRPEGTAPVVRSYVENKLFAPEVQKPSKFYYMGPMFRYERPQAGRLRQFHQIGVECFGSSNPATDVXTIVMAAHFLKEIGIQGVKLHLNTLGNPESRAAYRQALIDYLTPLKETLSKDSQRRLEENPLRVLDSKEKEDKVAVENAPSILDFLDEESQAHFDAVRQMLENLGVDYIIDTNMVRGLDYYNHTIFEFITEIEGNDLTVCAGGRYDGLVAYFGGPETAGFGFGLGVERLLLILEKQGVALPIENALDVYIAVLGDGANVKALELVQALRQQGFKAERDYLNRKLKAQFKSADVFATKTLITLGESEVESGQVTVKNNQTREEVQVSLETISQNFSEIFEKLGFYTQ.

This sequence belongs to the class-II aminoacyl-tRNA synthetase family. In terms of assembly, homodimer.

The protein localises to the cytoplasm. It carries out the reaction tRNA(His) + L-histidine + ATP = L-histidyl-tRNA(His) + AMP + diphosphate + H(+). The chain is Histidine--tRNA ligase from Streptococcus pneumoniae serotype 19F (strain G54).